Here is a 150-residue protein sequence, read N- to C-terminus: Large ribosomal subunit protein uL13 (150 aa).

The disordered stretch occupies residues Gly128 to Lys150.

The protein belongs to the universal ribosomal protein uL13 family. As to quaternary structure, part of the 50S ribosomal subunit.

Functionally, this protein is one of the early assembly proteins of the 50S ribosomal subunit, although it is not seen to bind rRNA by itself. It is important during the early stages of 50S assembly. This is Large ribosomal subunit protein uL13 from Prochlorococcus marinus (strain NATL1A).